The sequence spans 330 residues: Small ribosomal subunit protein uS2 (330 aa).

The protein belongs to the universal ribosomal protein uS2 family.

This chain is Small ribosomal subunit protein uS2, found in Bradyrhizobium sp. (strain BTAi1 / ATCC BAA-1182).